A 202-amino-acid chain; its full sequence is Transcription antitermination protein NusB (202 aa).

The span at 1–11 shows a compositional bias: basic and acidic residues; it reads MTEERTADNKA. Disordered regions lie at residues 1-21 and 169-202; these read MTEERTADNKAAKAASFKRHG and SAAKRAEQAEQPGQAESDELDGLLDGVVQESDEA.

It belongs to the NusB family.

In terms of biological role, involved in transcription antitermination. Required for transcription of ribosomal RNA (rRNA) genes. Binds specifically to the boxA antiterminator sequence of the ribosomal RNA (rrn) operons. The sequence is that of Transcription antitermination protein NusB from Corynebacterium jeikeium (strain K411).